The primary structure comprises 178 residues: Large ribosomal subunit protein uL6 (178 aa).

It belongs to the universal ribosomal protein uL6 family. In terms of assembly, part of the 50S ribosomal subunit.

Its function is as follows. This protein binds to the 23S rRNA, and is important in its secondary structure. It is located near the subunit interface in the base of the L7/L12 stalk, and near the tRNA binding site of the peptidyltransferase center. In Lactococcus lactis subsp. cremoris (strain SK11), this protein is Large ribosomal subunit protein uL6.